The sequence spans 382 residues: Alkanesulfonate monooxygenase (382 aa).

It belongs to the SsuD family. Homotetramer.

It carries out the reaction an alkanesulfonate + FMNH2 + O2 = an aldehyde + FMN + sulfite + H2O + 2 H(+). Catalyzes the desulfonation of aliphatic sulfonates. The chain is Alkanesulfonate monooxygenase from Yersinia pseudotuberculosis serotype IB (strain PB1/+).